Reading from the N-terminus, the 1501-residue chain is EF-hand calcium-binding domain-containing protein 6 (1501 aa).

The disordered stretch occupies residues 18 to 47 (RKFTHSRPHSSPCRVYSRNGSPNKFRSSST). Residues 35–47 (RNGSPNKFRSSST) are compositionally biased toward polar residues. 7 consecutive EF-hand domains span residues 70-105 (DRGDELQKAFQLLDTGQNLTVSKSELRRIITDFLMP), 172-207 (KNIKTVMKAFELIDVNKTGLVRPQELRRVLETFCMK), 297-332 (KSYEKVEKALSAGDPCKGGYVSFNYLKIVLDTFVYQ), 403-438 (DHSASLKKALLIINTKPDGPITREEFRYILNCMAVK), 439-474 (LSDSEFKELMQMLDPGDTGVVNTSMFIDLIEENCRM), 504-539 (RNLQAFYNMLRSYDLGDTGRIGRNNFKKIMHVFCPF), and 634-669 (QQDPAFKKRFLDFSKEPNGKINVHDFKKVLEDTGMP). The disordered stretch occupies residues 699-718 (EDPPMRGPETTPPQPPTPSK). EF-hand domains lie at 741–776 (ESFRDPYSAFFKTDADRDGIINMHDLHRLLLHLLLN), 847–882 (NRWSDLSKNFLETDNEGNGILRRRDIKNALYGFDIP), 883–918 (LTPREFEKLWARYDTEGKGHITYQEFLQKLGINYSP), 964–999 (DRHQDISKAFTKTDQSKTNYISICKMQEVLEECGCS), 1069–1104 (SSQLALSTAFSALDKEDTGFVKATEFGQVLKDFCYK), 1176–1211 (SHYHAITQEFENFDTMKTNTISREEFRAICNRRVQI), and 1212–1247 (LTDEQFDRLWNEMPVNAKGRLKYPDFLSRFSSETAA). Positions 754, 756, 758, and 765 each coordinate Ca(2+). Phosphothreonine is present on Thr-884. The disordered stretch occupies residues 1246 to 1307 (AATPMATGDS…TTVIPGTPPL (62 aa)). Polar residues-rich tracts occupy residues 1270-1279 (GTRSALSLPT) and 1286-1301 (SKSQSHPCTPASTTVI). Residue Ser-1290 is modified to Phosphoserine. Residues Thr-1294 and Thr-1304 each carry the phosphothreonine modification. The interaction with PARK7 stretch occupies residues 1303-1501 (GTPPLQNCDP…YNDFLRAFLQ (199 aa)). EF-hand domains follow at residues 1359 to 1394 (ISKEECQQLIIKYDLKSNGKFAYCDFIQSCVLLLKA), 1434 to 1469 (HCWRPMRRTFKSYDEAGTGLLSVADFRTVLRQYSIN), and 1470 to 1501 (LSEEEFFHILEYYDKTLSSKISYNDFLRAFLQ). An interaction with AR region spans residues 1407-1501 (NAHKMKEAGA…YNDFLRAFLQ (95 aa)).

As to quaternary structure, microtubule inner protein component of sperm flagellar doublet microtubules. Binds PARK7. Part of a ternary complex containing PARK7, EFCAB6/DJBP and AR. Specifically expressed in the testis.

The protein resides in the nucleus. Its subcellular location is the cytoplasm. The protein localises to the cytoskeleton. It is found in the flagellum axoneme. Its function is as follows. Negatively regulates the androgen receptor by recruiting histone deacetylase complex, and protein DJ-1 antagonizes this inhibition by abrogation of this complex. Microtubule inner protein (MIP) part of the dynein-decorated doublet microtubules (DMTs) in cilia axoneme, which is required for motile cilia beating. In Homo sapiens (Human), this protein is EF-hand calcium-binding domain-containing protein 6.